Reading from the N-terminus, the 390-residue chain is Protein phosphatase 1B (390 aa).

A compositionally biased stretch (basic and acidic residues) spans 1 to 14; that stretch reads MGAFLDKPKTEKHN. The interval 1 to 20 is disordered; the sequence is MGAFLDKPKTEKHNAHGAGN. Gly-2 carries the N-myristoyl glycine lipid modification. A Glycyl lysine isopeptide (Lys-Gly) (interchain with G-Cter in ISG15) cross-link involves residue Lys-12. In terms of domain architecture, PPM-type phosphatase spans 23-295; sequence RYGLSSMQGW…DNMSIVLVCF (273 aa). Positions 60, 61, 243, and 286 each coordinate Mn(2+). The disordered stretch occupies residues 371-390; it reads NPNKDNDGGAGDLEDSLVAL. A Phosphoserine modification is found at Ser-386.

This sequence belongs to the PP2C family. Monomer. Interacts with PAK6. Interacts with the phosphorylated form of IKBKB/IKKB. The cofactor is Mg(2+). It depends on Mn(2+) as a cofactor. Post-translationally, isgylation negatively regulates its activity. N-myristoylation is essential for the recognition of its substrates for dephosphorylation.

Its subcellular location is the cytoplasm. The protein resides in the cytosol. It localises to the membrane. The catalysed reaction is O-phospho-L-seryl-[protein] + H2O = L-seryl-[protein] + phosphate. It catalyses the reaction O-phospho-L-threonyl-[protein] + H2O = L-threonyl-[protein] + phosphate. Enzyme with a broad specificity. Dephosphorylates PRKAA1 and PRKAA2. Inhibits TBK1-mediated antiviral signaling by dephosphorylating it at 'Ser-172'. Plays an important role in the termination of TNF-alpha-mediated NF-kappa-B activation through dephosphorylating and inactivating IKBKB/IKKB. This chain is Protein phosphatase 1B (Ppm1b), found in Rattus norvegicus (Rat).